The primary structure comprises 534 residues: Probable glycine dehydrogenase (decarboxylating) subunit 2 (534 aa).

Position 273 is an N6-(pyridoxal phosphate)lysine (Lys273).

It belongs to the GcvP family. C-terminal subunit subfamily. In terms of assembly, the glycine cleavage system is composed of four proteins: P, T, L and H. In this organism, the P 'protein' is a heterodimer of two subunits. It depends on pyridoxal 5'-phosphate as a cofactor.

It catalyses the reaction N(6)-[(R)-lipoyl]-L-lysyl-[glycine-cleavage complex H protein] + glycine + H(+) = N(6)-[(R)-S(8)-aminomethyldihydrolipoyl]-L-lysyl-[glycine-cleavage complex H protein] + CO2. Functionally, the glycine cleavage system catalyzes the degradation of glycine. The P protein binds the alpha-amino group of glycine through its pyridoxal phosphate cofactor; CO(2) is released and the remaining methylamine moiety is then transferred to the lipoamide cofactor of the H protein. The protein is Probable glycine dehydrogenase (decarboxylating) subunit 2 of Bacillus cereus (strain ATCC 14579 / DSM 31 / CCUG 7414 / JCM 2152 / NBRC 15305 / NCIMB 9373 / NCTC 2599 / NRRL B-3711).